The sequence spans 78 residues: Translation initiation factor IF-1, plastid (78 aa).

One can recognise an S1-like domain in the interval 1–72 (MKKQDLIDME…TKGRITYRLR (72 aa)).

It belongs to the IF-1 family. Component of the 30S ribosomal translation pre-initiation complex which assembles on the 30S ribosome in the order IF-2 and IF-3, IF-1 and N-formylmethionyl-tRNA(fMet); mRNA recruitment can occur at any time during PIC assembly.

The protein localises to the plastid. One of the essential components for the initiation of protein synthesis. Stabilizes the binding of IF-2 and IF-3 on the 30S subunit to which N-formylmethionyl-tRNA(fMet) subsequently binds. Helps modulate mRNA selection, yielding the 30S pre-initiation complex (PIC). Upon addition of the 50S ribosomal subunit IF-1, IF-2 and IF-3 are released leaving the mature 70S translation initiation complex. This chain is Translation initiation factor IF-1, plastid, found in Aneura mirabilis (Parasitic liverwort).